Reading from the N-terminus, the 592-residue chain is Leucine-rich repeat and immunoglobulin-like domain-containing nogo receptor-interacting protein 3 (592 aa).

The first 24 residues, 1-24 (MTCWLCVLSLPLLLLPAAPPPAGG), serve as a signal peptide directing secretion. The LRRNT domain occupies 25–54 (CPARCECTVQTRAVACTRRRLTAVPDGIPA). The Extracellular portion of the chain corresponds to 25-531 (CPARCECTVQ…LDLTTILVST (507 aa)). LRR repeat units lie at residues 55-76 (ETRL…DLAA), 79-100 (ALEE…AFAN), 103-124 (RLRV…VFTR), 127-148 (NLTL…TFQD), 151-172 (SLRR…AFAG), 175-196 (ALEE…SLGH), 207-228 (HLAI…LHLE), 247-268 (NLTS…ALRH), 271-292 (HLTC…SFRD), 295-316 (RLRE…AFLG), and 319-340 (QIRL…TFHS). An N-linked (GlcNAc...) asparagine glycan is attached at asparagine 127. N-linked (GlcNAc...) asparagine glycosylation is present at asparagine 185. Asparagine 247, asparagine 257, and asparagine 276 each carry an N-linked (GlcNAc...) asparagine glycan. N-linked (GlcNAc...) asparagine glycosylation occurs at asparagine 324. Residues 352 to 406 (NPLACDCRLLWIVQRRKTLNFDGRLPACATPAEVRGDALRNLPDSVLFEYFVCRK) enclose the LRRCT domain. The 90-residue stretch at 407 to 496 (PKIRERRLQR…GNDTYFATLT (90 aa)) folds into the Ig-like C2-type domain. Cysteines 429 and 480 form a disulfide. 2 N-linked (GlcNAc...) asparagine glycosylation sites follow: asparagine 488 and asparagine 512. The helical transmembrane segment at 532–552 (AMGCITFLGVVLFCFVLLFVW) threads the bilayer. At 553–592 (SRGRGQHKNNFSVEYSFRKVDGPAAAAGQGGARKFNMKMI) the chain is on the cytoplasmic side.

Its subcellular location is the membrane. This chain is Leucine-rich repeat and immunoglobulin-like domain-containing nogo receptor-interacting protein 3 (LINGO3), found in Homo sapiens (Human).